Consider the following 1331-residue polypeptide: Sodium-dependent transporter bedraggled (1331 aa).

The interval 1 to 62 (MSSKEQQAAG…QLEHEQFGLS (62 aa)) is disordered. Residues 16–25 (NSNAYSSLPP) show a composition bias toward polar residues. The span at 28-43 (TGAGCSGAALGSGTGT) shows a compositional bias: gly residues. Asn168 is a glycosylation site (N-linked (GlcNAc...) asparagine). 2 disordered regions span residues 221-284 (EPRT…TEPV) and 363-473 (QTNA…SASS). Polar residues predominate over residues 258 to 282 (KTFSCSLRPTSQIASSSGSLETSTE). Positions 369–383 (SSEEPRPRQYGRRLE) are enriched in basic and acidic residues. Residues 413-436 (LQDTPTHPIMSTCSELSSARSSRM) show a composition bias toward polar residues. Positions 437 to 453 (PSPVSLPSDSSSSGSSS) are enriched in low complexity. The span at 463–473 (VQTTTMCSASS) shows a compositional bias: polar residues. Transmembrane regions (helical) follow at residues 505–525 (LALI…VLTI), 531–551 (FLLQ…WLQM), and 567–587 (ISPI…FLAL). N-linked (GlcNAc...) asparagine glycosylation is found at Asn627 and Asn631. 4 helical membrane passes run 667 to 687 (QLAF…CKGL), 696 to 716 (IIYT…VYVV), 741 to 761 (TAAT…VIAI), and 778 to 798 (AILL…LALC). An N-linked (GlcNAc...) asparagine glycan is attached at Asn857. The helical transmembrane segment at 890–910 (WVWAAVAFATFAGFGLAQLCV) threads the bilayer. A glycan (N-linked (GlcNAc...) asparagine) is linked at Asn921. The next 4 helical transmembrane spans lie at 926–946 (VLLS…EMGI), 956–976 (LGGS…VFLI), 998–1018 (AFLA…LSVV), and 1044–1064 (MGSL…IIQI). 3 disordered regions span residues 1086 to 1136 (PEEG…SYTT), 1169 to 1238 (SLDA…ASTL), and 1256 to 1275 (VRHR…TLPR). 2 stretches are compositionally biased toward polar residues: residues 1097–1115 (ARQT…TTEG) and 1186–1196 (ILTNPAGSSFN). The segment covering 1197–1209 (ADPSPASSSSPES) has biased composition (low complexity).

The protein belongs to the sodium:neurotransmitter symporter (SNF) (TC 2.A.22) family.

It is found in the membrane. Its function is as follows. Putative sodium-dependent transporter which is required for viability, early imaginal disk development and adult motor coordination. Also has a role in the fate commitment of the R3/R4 photoreceptor cells. May function in ommatidial polarity by regulating the activity of the core polarity genes, acting upstream of (or in parallel to) Vang, dsh, pk, stan, and dgo, but downstream or independently of fz. This chain is Sodium-dependent transporter bedraggled, found in Drosophila melanogaster (Fruit fly).